The chain runs to 201 residues: Holliday junction branch migration complex subunit RuvA (201 aa).

The segment at 1 to 64 (MYEYIRGQFQ…EDFIGLYGFT (64 aa)) is domain I. The segment at 65-143 (TREELEMFKL…PDELTSEEGQ (79 aa)) is domain II. Positions 144–152 (LIEGINDNS) are flexible linker. Positions 153-201 (DYSFNINETLSALMALGYTEKEAQKALEKVDKTLSIENMIKESLKLLMR) are domain III.

The protein belongs to the RuvA family. As to quaternary structure, homotetramer. Forms an RuvA(8)-RuvB(12)-Holliday junction (HJ) complex. HJ DNA is sandwiched between 2 RuvA tetramers; dsDNA enters through RuvA and exits via RuvB. An RuvB hexamer assembles on each DNA strand where it exits the tetramer. Each RuvB hexamer is contacted by two RuvA subunits (via domain III) on 2 adjacent RuvB subunits; this complex drives branch migration. In the full resolvosome a probable DNA-RuvA(4)-RuvB(12)-RuvC(2) complex forms which resolves the HJ.

Its subcellular location is the cytoplasm. Functionally, the RuvA-RuvB-RuvC complex processes Holliday junction (HJ) DNA during genetic recombination and DNA repair, while the RuvA-RuvB complex plays an important role in the rescue of blocked DNA replication forks via replication fork reversal (RFR). RuvA specifically binds to HJ cruciform DNA, conferring on it an open structure. The RuvB hexamer acts as an ATP-dependent pump, pulling dsDNA into and through the RuvAB complex. HJ branch migration allows RuvC to scan DNA until it finds its consensus sequence, where it cleaves and resolves the cruciform DNA. This is Holliday junction branch migration complex subunit RuvA from Clostridium perfringens (strain 13 / Type A).